A 212-amino-acid polypeptide reads, in one-letter code: uncharacterized protein (212 aa).

It belongs to the mimivirus R683/R861 family.

This is an uncharacterized protein from Acanthamoeba polyphaga (Amoeba).